Here is a 372-residue protein sequence, read N- to C-terminus: Probable butyrate kinase (372 aa).

Belongs to the acetokinase family.

The protein localises to the cytoplasm. It carries out the reaction butanoate + ATP = butanoyl phosphate + ADP. This chain is Probable butyrate kinase, found in Oleidesulfovibrio alaskensis (strain ATCC BAA-1058 / DSM 17464 / G20) (Desulfovibrio alaskensis).